We begin with the raw amino-acid sequence, 350 residues long: Methylthioribose-1-phosphate isomerase (350 aa).

Aspartate 241 acts as the Proton donor in catalysis.

Belongs to the eIF-2B alpha/beta/delta subunits family. MtnA subfamily.

Its subcellular location is the cytoplasm. The protein resides in the nucleus. It carries out the reaction 5-(methylsulfanyl)-alpha-D-ribose 1-phosphate = 5-(methylsulfanyl)-D-ribulose 1-phosphate. It functions in the pathway amino-acid biosynthesis; L-methionine biosynthesis via salvage pathway; L-methionine from S-methyl-5-thio-alpha-D-ribose 1-phosphate: step 1/6. Catalyzes the interconversion of methylthioribose-1-phosphate (MTR-1-P) into methylthioribulose-1-phosphate (MTRu-1-P). This is Methylthioribose-1-phosphate isomerase from Nematostella vectensis (Starlet sea anemone).